A 438-amino-acid polypeptide reads, in one-letter code: Argininosuccinate lyase (438 aa).

The protein belongs to the lyase 1 family. Argininosuccinate lyase subfamily.

Its subcellular location is the cytoplasm. It catalyses the reaction 2-(N(omega)-L-arginino)succinate = fumarate + L-arginine. It participates in amino-acid biosynthesis; L-arginine biosynthesis; L-arginine from L-ornithine and carbamoyl phosphate: step 3/3. The protein is Argininosuccinate lyase of Clostridium kluyveri (strain NBRC 12016).